Consider the following 468-residue polypeptide: Tyramine receptor tyra-2 (468 aa).

The Extracellular portion of the chain corresponds to 1-23 (MMSSYVMSPVDETYTLFQILKGS). The helical transmembrane segment at 24–43 (ALFLLVLWTIFANSLVFIVL) threads the bilayer. At 44–54 (YKNPRLQTVPN) the chain is on the cytoplasmic side. Residues 55-77 (LLVGNLAFSDLALGLIVLPLSSV) traverse the membrane as a helical segment. At 78–91 (YAIAGEWVFPDALC) the chain is on the extracellular side. Residues Cys-91 and Cys-177 are joined by a disulfide bond. A helical membrane pass occupies residues 92 to 114 (EVFVSADILCSTASIWNLSIVGL). Residues 115-134 (DRYWAITSPVAYMSKRNKRT) are Cytoplasmic-facing. A helical transmembrane segment spans residues 135–157 (AGIMILSVWISSALISLAPLLGW). Over 158 to 186 (KQTAQTPNLIYEKNNTVRQCTFLDLPSYT) the chain is Extracellular. The N-linked (GlcNAc...) asparagine glycan is linked to Asn-171. Residues 187–209 (VYSATGSFFIPTLLMFFVYFKIY) traverse the membrane as a helical segment. Over 210-387 (QAFAKHRARQ…SAAKERRGVK (178 aa)) the chain is Cytoplasmic. Residues 252 to 306 (DEFAKEEEEEEDSESSGQVENGLGNGNDAIIEEDECEDEDSDEKRDDHTSMTTVT) form a disordered region. 2 stretches are compositionally biased toward acidic residues: residues 255 to 265 (AKEEEEEEDSE) and 281 to 292 (IIEEDECEDEDS). Residues 388–410 (VLGIILGCFTVCWAPFFTMYVLV) traverse the membrane as a helical segment. At 411 to 424 (QFCKDCSPNAHIEM) the chain is on the extracellular side. A helical transmembrane segment spans residues 425-444 (FITWLGYSNSAMNPIIYTVF). Residues 445–468 (NRDYQIALKRLFTSEKKPSSTSRV) lie on the Cytoplasmic side of the membrane.

It belongs to the G-protein coupled receptor 1 family. Expressed in the pharyngeal neurons, MCL/R and NSML/R and the AS group of amphidial sensory neurons, ASEL/R, AGSL/R, ASHL/R and ASIL/R.

Its subcellular location is the cell membrane. Its function is as follows. G-protein coupled receptor for tyramine, a known neurotransmitter and neuromodulator and direct precursor of octopamine. Expression in amphidial sensory neurons suggests a role in chemosensation. The chain is Tyramine receptor tyra-2 (tyra-2) from Caenorhabditis elegans.